Consider the following 199-residue polypeptide: N-(5'-phosphoribosyl)anthranilate isomerase (199 aa).

This sequence belongs to the TrpF family.

It catalyses the reaction N-(5-phospho-beta-D-ribosyl)anthranilate = 1-(2-carboxyphenylamino)-1-deoxy-D-ribulose 5-phosphate. Its pathway is amino-acid biosynthesis; L-tryptophan biosynthesis; L-tryptophan from chorismate: step 3/5. This chain is N-(5'-phosphoribosyl)anthranilate isomerase, found in Campylobacter jejuni subsp. jejuni serotype O:2 (strain ATCC 700819 / NCTC 11168).